The following is a 147-amino-acid chain: Large ribosomal subunit protein uL15 (147 aa).

Over residues 1–20 the composition is skewed to basic and acidic residues; sequence MTLRLNDLKPADGARTERTR. A disordered region spans residues 1-61; the sequence is MTLRLNDLKP…GFEGGQTPMQ (61 aa). Positions 23 to 33 are enriched in gly residues; that stretch reads RGIGSGLGKTA. Residues 34-47 show a composition bias toward basic residues; sequence GRGHKGSFARKGGG.

The protein belongs to the universal ribosomal protein uL15 family. Part of the 50S ribosomal subunit.

In terms of biological role, binds to the 23S rRNA. The chain is Large ribosomal subunit protein uL15 from Xanthomonas axonopodis pv. citri (strain 306).